Reading from the N-terminus, the 275-residue chain is NADH-quinone oxidoreductase subunit E 1 (275 aa).

The [2Fe-2S] cluster site is built by cysteine 99, cysteine 104, cysteine 140, and cysteine 144. The tract at residues 200–275 (LQAPEPVEEK…DKSKPAKKPR (76 aa)) is disordered. Over residues 206–221 (VEEKKSVRASKAKDEQ) the composition is skewed to basic and acidic residues. The segment covering 231-242 (AKPSTATDVTNP) has biased composition (polar residues). Low complexity predominate over residues 243–256 (TLKTPATARKAAAK). Residues 258 to 269 (VKIEGETVDKSK) show a composition bias toward basic and acidic residues.

Belongs to the complex I 24 kDa subunit family. The cofactor is [2Fe-2S] cluster.

It catalyses the reaction a quinone + NADH + 5 H(+)(in) = a quinol + NAD(+) + 4 H(+)(out). Functionally, NDH-1 shuttles electrons from NADH, via FMN and iron-sulfur (Fe-S) centers, to quinones in the respiratory chain. The immediate electron acceptor for the enzyme in this species is believed to be ubiquinone. Couples the redox reaction to proton translocation (for every two electrons transferred, four hydrogen ions are translocated across the cytoplasmic membrane), and thus conserves the redox energy in a proton gradient. The polypeptide is NADH-quinone oxidoreductase subunit E 1 (nuoE1) (Rhizobium meliloti (strain 1021) (Ensifer meliloti)).